A 228-amino-acid chain; its full sequence is Mitochondrial assembly of ribosomal large subunit protein 1 (228 aa).

A disordered region spans residues 53-77 (SLTRGLHHGPQPEERTAGDARLQPG).

Belongs to the Iojap/RsfS family. Associates with the mitochondrial ribosome large subunit (39S) via interaction with MRPL12 and/or MRPL14. The interaction generates steric hindrance that is expected to prevent premature association of the 28S and 39S ribosomal subunits. Identified in a complex composed of MALSU1, MIEF1 upstream open reading frame protein and NDUFAB1; within the trimeric complex, MIEF1 upstream open reading frame protein functions as a bridging scaffold that interacts with MALSU1 on one side, and with NDUFAB1 on the other side. Interacts with MRPL12 and MRPL14.

Its subcellular location is the mitochondrion matrix. In terms of biological role, required for normal mitochondrial ribosome function and mitochondrial translation. May play a role in ribosome biogenesis by preventing premature association of the 28S and 39S ribosomal subunits. Interacts with mitochondrial ribosomal protein uL14m (MRPL14), probably blocking formation of intersubunit bridge B8, preventing association of the 28S and 39S ribosomal subunits. Addition to isolated mitochondrial ribosomal subunits partially inhibits translation, probably by interfering with the association of the 28S and 39S ribosomal subunits and the formation of functional ribosomes. May also participate in the assembly and/or regulation of the stability of the large subunit of the mitochondrial ribosome. May function as a ribosomal silencing factor. In Mus musculus (Mouse), this protein is Mitochondrial assembly of ribosomal large subunit protein 1 (Malsu1).